Consider the following 277-residue polypeptide: F41 fimbrial protein (277 aa).

The first 22 residues, 1–22, serve as a signal peptide directing secretion; that stretch reads MKKTLIALAVAASAAVSGSVMA.

This sequence belongs to the fimbrial K88 protein family.

It is found in the fimbrium. In terms of biological role, fimbriae (also called pili), polar filaments radiating from the surface of the bacterium to a length of 0.5-1.5 micrometers and numbering 100-300 per cell, enable bacteria to colonize the epithelium of specific host organs. This is F41 fimbrial protein (FimF41a) from Escherichia coli.